The following is a 260-amino-acid chain: Isoprenyl transferase (260 aa).

Residue Asp-40 is part of the active site. Asp-40 provides a ligand contact to Mg(2+). Residues 41–44 (GNGR), Trp-45, Arg-53, His-57, and 85–87 (STE) each bind substrate. Asn-88 acts as the Proton acceptor in catalysis. Substrate is bound by residues Trp-89, Arg-91, Arg-208, and 214-216 (RLS). A Mg(2+)-binding site is contributed by Glu-227.

The protein belongs to the UPP synthase family. In terms of assembly, homodimer. The cofactor is Mg(2+).

Its function is as follows. Catalyzes the condensation of isopentenyl diphosphate (IPP) with allylic pyrophosphates generating different type of terpenoids. The polypeptide is Isoprenyl transferase (Bacillus subtilis (strain 168)).